The primary structure comprises 399 residues: Cell division protein FtsZ (399 aa).

GTP-binding positions include 18 to 22 (GGGVN), 105 to 107 (GTG), Glu136, Arg140, and Asp184. The disordered stretch occupies residues 311 to 399 (GFDGGQPPSK…EELDVPDFLK (89 aa)). Positions 388 to 399 (AAEELDVPDFLK) are enriched in acidic residues.

It belongs to the FtsZ family. As to quaternary structure, homodimer. Polymerizes to form a dynamic ring structure in a strictly GTP-dependent manner. Interacts directly with several other division proteins.

The protein resides in the cytoplasm. Functionally, essential cell division protein that forms a contractile ring structure (Z ring) at the future cell division site. The regulation of the ring assembly controls the timing and the location of cell division. One of the functions of the FtsZ ring is to recruit other cell division proteins to the septum to produce a new cell wall between the dividing cells. Binds GTP and shows GTPase activity. This Streptomyces coelicolor (strain ATCC BAA-471 / A3(2) / M145) protein is Cell division protein FtsZ.